A 203-amino-acid polypeptide reads, in one-letter code: Holliday junction branch migration complex subunit RuvA (203 aa).

Residues 1–63 (MIGKLSGKID…EEHIHLYGFL (63 aa)) are domain I. Residues 64–142 (TLEEKNFFNL…KISSGSVIIK (79 aa)) form a domain II region. Residues 143–149 (DSLNIKN) form a flexible linker region. The tract at residues 150–203 (ITPVASNEVIKALVNLGFSRFEAQNAVQGIIIQNPEISIDELIKTALKNRNAGL) is domain III.

It belongs to the RuvA family. Homotetramer. Forms an RuvA(8)-RuvB(12)-Holliday junction (HJ) complex. HJ DNA is sandwiched between 2 RuvA tetramers; dsDNA enters through RuvA and exits via RuvB. An RuvB hexamer assembles on each DNA strand where it exits the tetramer. Each RuvB hexamer is contacted by two RuvA subunits (via domain III) on 2 adjacent RuvB subunits; this complex drives branch migration. In the full resolvosome a probable DNA-RuvA(4)-RuvB(12)-RuvC(2) complex forms which resolves the HJ.

It localises to the cytoplasm. In terms of biological role, the RuvA-RuvB-RuvC complex processes Holliday junction (HJ) DNA during genetic recombination and DNA repair, while the RuvA-RuvB complex plays an important role in the rescue of blocked DNA replication forks via replication fork reversal (RFR). RuvA specifically binds to HJ cruciform DNA, conferring on it an open structure. The RuvB hexamer acts as an ATP-dependent pump, pulling dsDNA into and through the RuvAB complex. HJ branch migration allows RuvC to scan DNA until it finds its consensus sequence, where it cleaves and resolves the cruciform DNA. This chain is Holliday junction branch migration complex subunit RuvA, found in Rickettsia felis (strain ATCC VR-1525 / URRWXCal2) (Rickettsia azadi).